Here is a 147-residue protein sequence, read N- to C-terminus: Hemoglobin subunit beta-1 (147 aa).

The residue at position 2 (Val2) is an N-acetylvaline. The Globin domain maps to 3–147 (HLTDAEKAAV…VATALAHKYH (145 aa)). Lys18 carries the post-translational modification N6-succinyllysine. 3 positions are modified to phosphoserine: Ser21, Ser45, and Ser51. Lys60 is modified (N6-succinyllysine). Heme b is bound by residues His64 and His93. At Arg105 the chain carries Asymmetric dimethylarginine. Position 124 is a phosphothreonine (Thr124).

This sequence belongs to the globin family. Heterotetramer of two alpha chains and two beta chains. In terms of tissue distribution, red blood cells.

Involved in oxygen transport from the lung to the various peripheral tissues. This chain is Hemoglobin subunit beta-1 (Hbb-b1), found in Mus musculus (Mouse).